The following is a 346-amino-acid chain: Arsenite methyltransferase (346 aa).

The protein belongs to the methyltransferase superfamily. Arsenite methyltransferase family.

The enzyme catalyses arsenic triglutathione + [thioredoxin]-dithiol + S-adenosyl-L-methionine + 2 H2O = methylarsonous acid + [thioredoxin]-disulfide + 3 glutathione + S-adenosyl-L-homocysteine + H(+). It catalyses the reaction arsenic triglutathione + 2 [thioredoxin]-dithiol + 2 S-adenosyl-L-methionine + H2O = dimethylarsinous acid + 2 [thioredoxin]-disulfide + 3 glutathione + 2 S-adenosyl-L-homocysteine + 2 H(+). It carries out the reaction arsenic triglutathione + 3 [thioredoxin]-dithiol + 3 S-adenosyl-L-methionine = trimethylarsine + 3 [thioredoxin]-disulfide + 3 glutathione + 3 S-adenosyl-L-homocysteine + 3 H(+). In terms of biological role, catalyzes the transfer of a methyl group from AdoMet to arsenite, producing methylated arsenicals. Involved in the conversion of As(III) to dimethylarsenate as the main product in the medium and also produces dimethylarsine and trimethylarsine gases. Reduces the arsenic toxicity in the cell and may contribute to the global arsenic cycling. The protein is Arsenite methyltransferase of Aquipseudomonas alcaligenes (strain ATCC 14909 / DSM 50342 / CCUG 1425 / JCM 20561 / NBRC 14159 / NCIMB 9945 / NCTC 10367 / 1577) (Pseudomonas alcaligenes).